Reading from the N-terminus, the 102-residue chain is Putative pterin-4-alpha-carbinolamine dehydratase (102 aa).

This sequence belongs to the pterin-4-alpha-carbinolamine dehydratase family.

It carries out the reaction (4aS,6R)-4a-hydroxy-L-erythro-5,6,7,8-tetrahydrobiopterin = (6R)-L-erythro-6,7-dihydrobiopterin + H2O. The protein is Putative pterin-4-alpha-carbinolamine dehydratase of Burkholderia lata (strain ATCC 17760 / DSM 23089 / LMG 22485 / NCIMB 9086 / R18194 / 383).